Here is a 261-residue protein sequence, read N- to C-terminus: Cytochrome c oxidase subunit 3 (261 aa).

Over 1–15 (MAHQAHAYHMVDPSP) the chain is Mitochondrial matrix. A helical membrane pass occupies residues 16–34 (WPLTGAVAALLLTSGLAIW). Over 35–40 (FPFNSL) the chain is Mitochondrial intermembrane. A helical transmembrane segment spans residues 41–66 (ILLTLGLVLLLLTMYQWWRDIVREGT). At 67 to 72 (FQGHHT) the chain is on the mitochondrial matrix side. The chain crosses the membrane as a helical span at residues 73–105 (PPVQKGLRYGMILFITSEVFFFLGFFWAFYHSS). Residues 106-128 (LAPTPELGGCWPPTGIVPLNPFE) are Mitochondrial intermembrane-facing. Residues 129–152 (VPLLNTAVLLASGVTVTWAHHSIM) traverse the membrane as a helical segment. The Mitochondrial matrix segment spans residues 153-155 (EGE). Residues 156-183 (RKQAIHSLTLTILLGFYFTFLQAMEYYE) traverse the membrane as a helical segment. The Mitochondrial intermembrane portion of the chain corresponds to 184 to 190 (APFTIAD). Residues 191-223 (GVYGSTFFVATGFHGLHVIIGSTFLAICLLRQI) form a helical membrane-spanning segment. The Mitochondrial matrix segment spans residues 224 to 232 (RYHFTSEHH). Residues 233-256 (FGFEAAAWYWHFVDVVWLFLYISI) traverse the membrane as a helical segment. The Mitochondrial intermembrane segment spans residues 257–261 (YWWGS).

It belongs to the cytochrome c oxidase subunit 3 family. As to quaternary structure, component of the cytochrome c oxidase (complex IV, CIV), a multisubunit enzyme composed of 14 subunits. The complex is composed of a catalytic core of 3 subunits MT-CO1, MT-CO2 and MT-CO3, encoded in the mitochondrial DNA, and 11 supernumerary subunits COX4I, COX5A, COX5B, COX6A, COX6B, COX6C, COX7A, COX7B, COX7C, COX8 and NDUFA4, which are encoded in the nuclear genome. The complex exists as a monomer or a dimer and forms supercomplexes (SCs) in the inner mitochondrial membrane with NADH-ubiquinone oxidoreductase (complex I, CI) and ubiquinol-cytochrome c oxidoreductase (cytochrome b-c1 complex, complex III, CIII), resulting in different assemblies (supercomplex SCI(1)III(2)IV(1) and megacomplex MCI(2)III(2)IV(2)).

It is found in the mitochondrion inner membrane. It carries out the reaction 4 Fe(II)-[cytochrome c] + O2 + 8 H(+)(in) = 4 Fe(III)-[cytochrome c] + 2 H2O + 4 H(+)(out). Component of the cytochrome c oxidase, the last enzyme in the mitochondrial electron transport chain which drives oxidative phosphorylation. The respiratory chain contains 3 multisubunit complexes succinate dehydrogenase (complex II, CII), ubiquinol-cytochrome c oxidoreductase (cytochrome b-c1 complex, complex III, CIII) and cytochrome c oxidase (complex IV, CIV), that cooperate to transfer electrons derived from NADH and succinate to molecular oxygen, creating an electrochemical gradient over the inner membrane that drives transmembrane transport and the ATP synthase. Cytochrome c oxidase is the component of the respiratory chain that catalyzes the reduction of oxygen to water. Electrons originating from reduced cytochrome c in the intermembrane space (IMS) are transferred via the dinuclear copper A center (CU(A)) of subunit 2 and heme A of subunit 1 to the active site in subunit 1, a binuclear center (BNC) formed by heme A3 and copper B (CU(B)). The BNC reduces molecular oxygen to 2 water molecules using 4 electrons from cytochrome c in the IMS and 4 protons from the mitochondrial matrix. In Tetraodon nigroviridis (Spotted green pufferfish), this protein is Cytochrome c oxidase subunit 3 (mt-co3).